A 583-amino-acid polypeptide reads, in one-letter code: CD166 antigen (583 aa).

Positions 1 to 27 (MESKGASSCRLLFCLLISATVFRPGLG) are cleaved as a signal peptide. 2 consecutive Ig-like V-type domains span residues 28-120 (WYTV…TEDN) and 125-234 (PTIV…KTIH). Residues 28–527 (WYTVNSAYGD…NREKVNDQAK (500 aa)) lie on the Extracellular side of the membrane. 2 disulfides stabilise this stretch: cysteine 43–cysteine 113 and cysteine 157–cysteine 220. 9 N-linked (GlcNAc...) asparagine glycosylation sites follow: asparagine 91, asparagine 95, asparagine 167, asparagine 265, asparagine 306, asparagine 361, asparagine 457, asparagine 480, and asparagine 499. Ig-like C2-type domains are found at residues 245–328 (PTEQ…TAIT), 333–409 (DLSL…ESLT), and 416–501 (PQIK…LNVS). 3 cysteine pairs are disulfide-bonded: cysteine 270–cysteine 313, cysteine 354–cysteine 392, and cysteine 435–cysteine 485. The chain crosses the membrane as a helical span at residues 528-549 (LIVGIVVGLLLAALVAGVVYWL). Residues 550-583 (YMKKSKTASKHVNKDLGNMEENKKLEENNHKTEA) lie on the Cytoplasmic side of the membrane. Residues 562–583 (NKDLGNMEENKKLEENNHKTEA) form a disordered region. Basic and acidic residues predominate over residues 569–583 (EENKKLEENNHKTEA).

In terms of assembly, homodimer. Interacts (via extracellular domain) with CD6 (via extracellular domain). Homodimerization and interaction with CD6 involve the same region and cannot occur simultaneously. The affinity for CD6 is much higher than the affinity for self-association. Interacts (via glycosylated extracellular domain) with LGALS1 and LGALS3. Interaction with LGALS1 or LGALS3 inhibits interaction with CD6. Post-translationally, glycosylated. As to expression, detected on hematopoietic stem cells derived from umbilical cord blood. Detected on lymph vessel endothelial cells, skin and tonsil. Detected on peripheral blood monocytes. Detected on monocyte-derived dendritic cells (at protein level). Detected at low levels in spleen, placenta, liver. Expressed by activated T-cells, B-cells, monocytes and thymic epithelial cells. Isoform 1 and isoform 3 are detected in vein and artery endothelial cells, astrocytes, keratinocytes and artery smooth muscle cells. Expressed by neurons in the brain. Restricted expression in tumor cell lines. Detected in highly metastasizing melanoma cell lines.

It is found in the cell membrane. The protein resides in the cell projection. It localises to the axon. Its subcellular location is the dendrite. The protein localises to the secreted. Cell adhesion molecule that mediates both heterotypic cell-cell contacts via its interaction with CD6, as well as homotypic cell-cell contacts. Promotes T-cell activation and proliferation via its interactions with CD6. Contributes to the formation and maturation of the immunological synapse via its interactions with CD6. Mediates homotypic interactions with cells that express ALCAM. Acts as a ligand for the LILRB4 receptor, enhancing LILRB4-mediated inhibition of T cell proliferation. Required for normal hematopoietic stem cell engraftment in the bone marrow. Mediates attachment of dendritic cells onto endothelial cells via homotypic interaction. Inhibits endothelial cell migration and promotes endothelial tube formation via homotypic interactions. Required for normal organization of the lymph vessel network. Required for normal hematopoietic stem cell engraftment in the bone marrow. Plays a role in hematopoiesis; required for normal numbers of hematopoietic stem cells in bone marrow. Promotes in vitro osteoblast proliferation and differentiation. Promotes neurite extension, axon growth and axon guidance; axons grow preferentially on surfaces that contain ALCAM. Mediates outgrowth and pathfinding for retinal ganglion cell axons. Functionally, inhibits activities of membrane-bound isoforms by competing for the same interaction partners. Inhibits cell attachment via homotypic interactions. Promotes endothelial cell migration. Inhibits endothelial cell tube formation. The chain is CD166 antigen (ALCAM) from Homo sapiens (Human).